We begin with the raw amino-acid sequence, 1237 residues long: Glutamate receptor ionotropic, NMDA 2C (1237 aa).

A signal peptide spans methionine 1–alanine 19. Over arginine 20 to alanine 554 the chain is Extracellular. Residues asparagine 70 and asparagine 73 are each glycosylated (N-linked (GlcNAc...) asparagine). Cysteines 82 and 317 form a disulfide. Residues asparagine 337 and asparagine 438 are each glycosylated (N-linked (GlcNAc...) asparagine). 2 cysteine pairs are disulfide-bonded: cysteine 426–cysteine 453 and cysteine 433–cysteine 454. Serine 509, threonine 511, and arginine 516 together coordinate L-glutamate. Asparagine 539 is a glycosylation site (N-linked (GlcNAc...) asparagine). The chain crosses the membrane as a helical span at residues valine 555–glutamate 575. The Cytoplasmic portion of the chain corresponds to tyrosine 576–lysine 601. Positions lysine 601–proline 620 are pore-forming. An intramembrane region (discontinuously helical) is located at residues serine 602–phenylalanine 611. The Cytoplasmic portion of the chain corresponds to asparagine 612–glycine 622. Residues threonine 623–threonine 644 traverse the membrane as a helical segment. The Extracellular segment spans residues alanine 645 to aspartate 813. An N-linked (GlcNAc...) asparagine glycan is attached at asparagine 685. Serine 687, threonine 688, and aspartate 729 together coordinate L-glutamate. Cysteine 743 and cysteine 798 are disulfide-bonded. Residues asparagine 814 to phenylalanine 833 form a helical membrane-spanning segment. At alanine 834–valine 1237 the chain is on the cytoplasmic side. Phosphoserine occurs at positions 875, 881, and 912. Over residues alanine 907–asparagine 925 the composition is skewed to polar residues. The tract at residues alanine 907–arginine 990 is disordered. Residues proline 930–threonine 941 are compositionally biased toward low complexity. Residues proline 968–proline 982 show a composition bias toward pro residues. The PDZ-binding signature appears at serine 1235–valine 1237.

This sequence belongs to the glutamate-gated ion channel (TC 1.A.10.1) family. NR2C/GRIN2C subfamily. As to quaternary structure, heterotetramer. Forms heterotetrameric channels composed of two GluN1/zeta subunits (GRIN1), and two identical GluN2/epsilon subunits (GRIN2A, GRIN2B, GRIN2C or GRIN2D) or GluN3 subunits (GRIN3A or GRIN3B) (in vitro). In vivo, the subunit composition may depend on the expression levels of the different subunits. Interacts with PDZ domains of PATJ and DLG4. Interacts (via PDZ-binding motif) with SNX27 (via PDZ domain); the interaction is required for recycling to the plasma membrane when endocytosed and prevent degradation in lysosomes. As to expression, detected in cerebellum.

Its subcellular location is the cell membrane. The protein localises to the postsynaptic cell membrane. The catalysed reaction is Ca(2+)(in) = Ca(2+)(out). It catalyses the reaction Na(+)(in) = Na(+)(out). It carries out the reaction K(+)(in) = K(+)(out). In terms of biological role, component of N-methyl-D-aspartate (NMDA) receptors (NMDARs) that function as heterotetrameric, ligand-gated cation channels with high calcium permeability and voltage-dependent block by Mg(2+). Participates in synaptic plasticity for learning and memory formation by contributing to the slow phase of excitatory postsynaptic current and long-term synaptic potentiation. Channel activation requires binding of the neurotransmitter L-glutamate to the GluN2 subunit, glycine or D-serine binding to the GluN1 subunit, plus membrane depolarization to eliminate channel inhibition by Mg(2+). NMDARs mediate simultaneously the potasium efflux and the influx of calcium and sodium. Each GluN2 subunit confers differential attributes to channel properties, including activation, deactivation and desensitization kinetics, pH sensitivity, Ca2(+) permeability, and binding to allosteric modulators. The sequence is that of Glutamate receptor ionotropic, NMDA 2C from Rattus norvegicus (Rat).